We begin with the raw amino-acid sequence, 1935 residues long: Myosin-7 (1935 aa).

Positions Asp32–Pro81 constitute a Myosin N-terminal SH3-like domain. One can recognise a Myosin motor domain in the interval Asp85–Asp778. The residue at position 129 (Lys129) is an N6,N6,N6-trimethyllysine. An ATP-binding site is contributed by Gly178 to Thr185. The residue at position 378 (Thr378) is a Phosphothreonine. Actin-binding regions lie at residues Leu655 to Glu677 and Lys757 to Gly771. Positions Leu781–Ser810 constitute an IQ domain. A coiled-coil region spans residues Leu839–Glu1935. Ser1137 and Ser1269 each carry phosphoserine. Thr1282 bears the Phosphothreonine mark. Residue Tyr1308 is modified to Phosphotyrosine. A Phosphothreonine modification is found at Thr1309. The residue at position 1510 (Ser1510) is a Phosphoserine. Thr1513 is modified (phosphothreonine). The interval Glu1907–Glu1935 is disordered. Residues Lys1923 to Glu1935 show a composition bias toward basic and acidic residues.

This sequence belongs to the TRAFAC class myosin-kinesin ATPase superfamily. Myosin family. In terms of assembly, muscle myosin is a hexameric protein that consists of 2 heavy chain subunits (MHC), 2 alkali light chain subunits (MLC) and 2 regulatory light chain subunits (MLC-2). Interacts with ECPAS. Interacts (via C-terminus) with LRRC39. As to expression, both wild type and variant Gln-403 are detected in skeletal muscle (at protein level).

The protein resides in the cytoplasm. The protein localises to the myofibril. It localises to the sarcomere. Myosins are actin-based motor molecules with ATPase activity essential for muscle contraction. Forms regular bipolar thick filaments that, together with actin thin filaments, constitute the fundamental contractile unit of skeletal and cardiac muscle. This Homo sapiens (Human) protein is Myosin-7 (MYH7).